The primary structure comprises 149 residues: MIMSLRLNDLKPALGASSCRARVGRGIGSGLGKTAGRGHKGSFARKGGGKIKPGFEGGQTPMQRRLPKIGFRSRSVANTAEVLSYKLDNLEPGEIDFASLRLAKLVPSTAKKAKIVKKGRLTKVFVLKGIESTAGARAMIETTGGSFQE.

The disordered stretch occupies residues 30–63; it reads GLGKTAGRGHKGSFARKGGGKIKPGFEGGQTPMQ. Over residues 36–49 the composition is skewed to basic residues; it reads GRGHKGSFARKGGG.

This sequence belongs to the universal ribosomal protein uL15 family. Part of the 50S ribosomal subunit.

Its function is as follows. Binds to the 23S rRNA. This is Large ribosomal subunit protein uL15 from Xylella fastidiosa (strain 9a5c).